The sequence spans 279 residues: Shikimate dehydrogenase (NADP(+)) (279 aa).

Shikimate is bound by residues 18 to 20 (SRS) and threonine 64. Catalysis depends on lysine 68, which acts as the Proton acceptor. Residue glutamate 80 participates in NADP(+) binding. Asparagine 89 and aspartate 104 together coordinate shikimate. NADP(+) is bound by residues 129–133 (GAGGA), 153–158 (NRTVSR), and isoleucine 218. Tyrosine 220 contributes to the shikimate binding site. Residue glycine 241 coordinates NADP(+).

The protein belongs to the shikimate dehydrogenase family. In terms of assembly, homodimer.

The enzyme catalyses shikimate + NADP(+) = 3-dehydroshikimate + NADPH + H(+). It participates in metabolic intermediate biosynthesis; chorismate biosynthesis; chorismate from D-erythrose 4-phosphate and phosphoenolpyruvate: step 4/7. Involved in the biosynthesis of the chorismate, which leads to the biosynthesis of aromatic amino acids. Catalyzes the reversible NADPH linked reduction of 3-dehydroshikimate (DHSA) to yield shikimate (SA). This is Shikimate dehydrogenase (NADP(+)) from Chelativorans sp. (strain BNC1).